The sequence spans 199 residues: 7-methyl-GTP pyrophosphatase (199 aa).

The active-site Proton acceptor is D74.

Belongs to the Maf family. YceF subfamily. A divalent metal cation serves as cofactor.

It is found in the cytoplasm. The catalysed reaction is N(7)-methyl-GTP + H2O = N(7)-methyl-GMP + diphosphate + H(+). Its function is as follows. Nucleoside triphosphate pyrophosphatase that hydrolyzes 7-methyl-GTP (m(7)GTP). May have a dual role in cell division arrest and in preventing the incorporation of modified nucleotides into cellular nucleic acids. The protein is 7-methyl-GTP pyrophosphatase of Cupriavidus metallidurans (strain ATCC 43123 / DSM 2839 / NBRC 102507 / CH34) (Ralstonia metallidurans).